Consider the following 179-residue polypeptide: ATP synthase subunit delta (179 aa).

It belongs to the ATPase delta chain family. As to quaternary structure, F-type ATPases have 2 components, F(1) - the catalytic core - and F(0) - the membrane proton channel. F(1) has five subunits: alpha(3), beta(3), gamma(1), delta(1), epsilon(1). F(0) has three main subunits: a(1), b(2) and c(10-14). The alpha and beta chains form an alternating ring which encloses part of the gamma chain. F(1) is attached to F(0) by a central stalk formed by the gamma and epsilon chains, while a peripheral stalk is formed by the delta and b chains.

The protein resides in the cell membrane. Functionally, f(1)F(0) ATP synthase produces ATP from ADP in the presence of a proton or sodium gradient. F-type ATPases consist of two structural domains, F(1) containing the extramembraneous catalytic core and F(0) containing the membrane proton channel, linked together by a central stalk and a peripheral stalk. During catalysis, ATP synthesis in the catalytic domain of F(1) is coupled via a rotary mechanism of the central stalk subunits to proton translocation. Its function is as follows. This protein is part of the stalk that links CF(0) to CF(1). It either transmits conformational changes from CF(0) to CF(1) or is implicated in proton conduction. The chain is ATP synthase subunit delta from Clostridium acetobutylicum (strain ATCC 824 / DSM 792 / JCM 1419 / IAM 19013 / LMG 5710 / NBRC 13948 / NRRL B-527 / VKM B-1787 / 2291 / W).